The sequence spans 492 residues: Glutamyl-tRNA(Gln) amidotransferase subunit A (492 aa).

Active-site charge relay system residues include Lys-78 and Ser-158. Residue Ser-182 is the Acyl-ester intermediate of the active site.

The protein belongs to the amidase family. GatA subfamily. As to quaternary structure, heterotrimer of A, B and C subunits.

The catalysed reaction is L-glutamyl-tRNA(Gln) + L-glutamine + ATP + H2O = L-glutaminyl-tRNA(Gln) + L-glutamate + ADP + phosphate + H(+). In terms of biological role, allows the formation of correctly charged Gln-tRNA(Gln) through the transamidation of misacylated Glu-tRNA(Gln) in organisms which lack glutaminyl-tRNA synthetase. The reaction takes place in the presence of glutamine and ATP through an activated gamma-phospho-Glu-tRNA(Gln). The polypeptide is Glutamyl-tRNA(Gln) amidotransferase subunit A (Orientia tsutsugamushi (strain Boryong) (Rickettsia tsutsugamushi)).